Consider the following 429-residue polypeptide: MKKTLLALLIASVMQSALAAPATPVREVDRIVAVVNKNVITWQELQARVNEAIKQLEAQKVAPPPREVLERQVLEQMITEEVQLQYAASGGLRIEDAAVDQAVANLAKQNKLSEAGLKAQLAKDGITLDRLRADIRRELTISRLRDSEVASRVNVSDSEVDQAMKSAQSANRTEYHLASILVAVPERADAKQIDQLSQKVHKAQADLAAGQPFAKVSAAYSDAPNALKGGDMGWRSATSLPQEFVQLLEQMKVGADTDVIRTQQGFFIFKLVDKRSGGAPMMVEQYHPRHILIRTNEAVSEADAKARIDQVRDRIMRGAKFADMAKLYSEDGSNAKGGDLGWVNMGDLVPEFEKAMVSLPIGQVSQPVRTPFGWHLILVEGKRNQDVSSDHEKMAVKQQIRARKMEQAYTDWVRQLRDSAFVEEHLDEK.

The N-terminal stretch at 1-19 (MKKTLLALLIASVMQSALA) is a signal peptide. PpiC domains lie at 172 to 273 (RTEY…KLVD) and 283 to 381 (VEQY…LVEG).

The protein localises to the periplasm. The catalysed reaction is [protein]-peptidylproline (omega=180) = [protein]-peptidylproline (omega=0). Chaperone involved in the correct folding and assembly of outer membrane proteins. Recognizes specific patterns of aromatic residues and the orientation of their side chains, which are found more frequently in integral outer membrane proteins. May act in both early periplasmic and late outer membrane-associated steps of protein maturation. The polypeptide is Chaperone SurA (Chromobacterium violaceum (strain ATCC 12472 / DSM 30191 / JCM 1249 / CCUG 213 / NBRC 12614 / NCIMB 9131 / NCTC 9757 / MK)).